We begin with the raw amino-acid sequence, 215 residues long: uncharacterized protein (215 aa).

This sequence belongs to the mimivirus L31/R44 family.

This is an uncharacterized protein from Acanthamoeba polyphaga (Amoeba).